We begin with the raw amino-acid sequence, 53 residues long: uncharacterized protein (53 aa).

A helical membrane pass occupies residues 24–44; sequence LMTFIAVNAVLSLILIRAVIL.

Its subcellular location is the membrane. This is an uncharacterized protein from Methanocaldococcus jannaschii (strain ATCC 43067 / DSM 2661 / JAL-1 / JCM 10045 / NBRC 100440) (Methanococcus jannaschii).